A 469-amino-acid polypeptide reads, in one-letter code: Sulfate adenylyltransferase subunit 1 (469 aa).

One can recognise a tr-type G domain in the interval 22–237 (KEVLRFITCG…LEEVPVKSEE (216 aa)). The tract at residues 31 to 38 (GSVDDGKS) is G1. 31–38 (GSVDDGKS) serves as a coordination point for GTP. Residues 89–93 (GITID) are G2. Positions 110–113 (DTPG) are G3. Residues 110 to 114 (DTPGH) and 165 to 168 (NKMD) contribute to the GTP site. The interval 165–168 (NKMD) is G4. The tract at residues 202-204 (SAK) is G5.

This sequence belongs to the TRAFAC class translation factor GTPase superfamily. Classic translation factor GTPase family. CysN/NodQ subfamily. As to quaternary structure, heterodimer composed of CysD, the smaller subunit, and CysN.

The catalysed reaction is sulfate + ATP + H(+) = adenosine 5'-phosphosulfate + diphosphate. It participates in sulfur metabolism; hydrogen sulfide biosynthesis; sulfite from sulfate: step 1/3. Functionally, with CysD forms the ATP sulfurylase (ATPS) that catalyzes the adenylation of sulfate producing adenosine 5'-phosphosulfate (APS) and diphosphate, the first enzymatic step in sulfur assimilation pathway. APS synthesis involves the formation of a high-energy phosphoric-sulfuric acid anhydride bond driven by GTP hydrolysis by CysN coupled to ATP hydrolysis by CysD. This is Sulfate adenylyltransferase subunit 1 from Methylorubrum extorquens (strain PA1) (Methylobacterium extorquens).